Here is a 989-residue protein sequence, read N- to C-terminus: Zinc finger SWIM domain-containing protein 4 (989 aa).

A disordered region spans residues 1–32 (MEPPAAKRSRGCPAGPEERDAGAGAARGRGRP). The SWIM-type zinc-finger motif lies at 139-176 (YHVSISFDRCKITSVSCGCDNRDLFYCAHVVALSLYRI).

The chain is Zinc finger SWIM domain-containing protein 4 (ZSWIM4) from Homo sapiens (Human).